We begin with the raw amino-acid sequence, 355 residues long: C-C chemokine receptor type 1 (355 aa).

Topologically, residues 1–34 (MEISDFTEAYPTTTEFDYGDSTPCQKTAVRAFGA) are extracellular. A helical membrane pass occupies residues 35–60 (GLLPPLYSLVFIIGVVGNVLVILVLM). The Cytoplasmic segment spans residues 61-64 (QHRR). Residues 65–91 (LQSMTSIYLFNLAVSDLVFLFTLPFWI) traverse the membrane as a helical segment. Residues 92-107 (DYKLKDDWIFGDAMCK) are Extracellular-facing. A disulfide bridge connects residues cysteine 106 and cysteine 183. The chain crosses the membrane as a helical span at residues 108–129 (LLSGFYYLGLYSEIFFIILLTI). Topologically, residues 130–146 (DRYLAIVHAVFALRART) are cytoplasmic. A helical membrane pass occupies residues 147 to 171 (VTFGIITSIITWALAILASMPALYF). Over 172 to 197 (FKAQWEFTHRTCSPHFPYKSLKQWKR) the chain is Extracellular. The chain crosses the membrane as a helical span at residues 198 to 223 (FQALKLNLLGLILPLLVMIICYAGII). The Cytoplasmic portion of the chain corresponds to 224–239 (RILLRRPSEKKVKAVR). A helical transmembrane segment spans residues 240–264 (LIFAITLLFFLLWTPYNLSVFVSAF). The Extracellular portion of the chain corresponds to 265–281 (QDVLFTNQCEQSKQLDL). A helical transmembrane segment spans residues 282–305 (AMQVTEVIAYTHCCVNPIIYVFVG). At 306-355 (ERFWKYLRQLFQRHVAIPLAKWLPFLSVDQLERTSSISPSTGEHELSAGF) the chain is on the cytoplasmic side.

It belongs to the G-protein coupled receptor 1 family. In terms of assembly, interacts with CREB3. Interacts with CCL3. Interacts with CCL15. Interacts with CCL23. Interacts with GNAI1. Interacts with PF4/CXCL4. As to expression, detected in the heart, spleen, lung, peritoneal exudate cells and leukocytes.

The protein resides in the cell membrane. Functionally, chemokine receptor that plays a crucial role in regulating immune cell migration, inflammation, and immune responses. Contributes to the inflammatory response by recruiting immune cells, such as monocytes, macrophages, T-cells, and dendritic cells, to sites of inflammation for the clearance of pathogens and the resolution of tissue damage. When activated by its ligands including CCL3, CCL5-9, CCL13-16 and CCL23, triggers a signaling cascade within immune cells, leading to their migration towards the source of the chemokine. For example, mediates neutrophil migration after activation by CCL3 leading to the sequential release of TNF-alpha and leukotriene B4. Also mediates monocyte migration upon CXCL4 binding. Activation by CCL5 results in neuroinflammation through the ERK1/2 signaling pathway. The polypeptide is C-C chemokine receptor type 1 (Ccr1) (Mus musculus (Mouse)).